Here is an 845-residue protein sequence, read N- to C-terminus: Synaptonemal complex protein 1 (845 aa).

Residues 59–215 (ETRQVYVDLN…YQLTEEKEAQ (157 aa)) form an interaction with SYCE3 region. Coiled-coil stretches lie at residues 64–211 (YVDL…LTEE) and 244–544 (LRTE…EIEV). The tract at residues 550–644 (EKLLGEVEKA…VSLKKQLEIE (95 aa)) is required for pH-induced assembly of C-terminal ends into antiparallel tetramers. A Nuclear localization signal motif is present at residues 553 to 556 (LGEV). The stretch at 620–663 (KTALETELSNIRNELVSLKKQLEIEREEKEKLKLEKENTAILKD) forms a coiled coil. The DNA-binding stretch occupies residues 657–845 (NTAILKDKKD…RLKEAEKLFA (189 aa)). Phosphoserine is present on serine 676. Polar residues predominate over residues 684–703 (FDSKTTPSQNISRISSSMES). Residues 684-709 (FDSKTTPSQNISRISSSMESGKTKDN) are disordered. The short motif at 753-756 (KKRK) is the Nuclear localization signal element. Positions 786–808 (LYNNNSPNSHLTPKQTPLSLSTP) are disordered.

In terms of assembly, structural component of synaptonemal complexes. Homotetramer that consists of an N-terminal four-helical bundle that bifurcates into two elongated C-terminal dimeric coiled coils. This tetrameric building block potentially self-assembles into a supramolecular zipper-like lattice to mediate meiotic chromosome synapsis. Self-assembly is likely initiated by local proton density at chromosome axis, which is predicted to trigger antiparallel back to back assembly of adjacent C-terminal ends into tetrameric structures that anchor to chromosomal DNA. Then the N-terminal ends are predicted to undergo cooperative antiparallel head to head assembly at the midline of synaptonemal complexes central element to form a zipper-like lattice between properly aligned homologous chromosomes. The nascent synapsis generated by SYCP1 is stabilized through interaction with central element proteins SYCE1 and SYCE2. Interacts (via tetrameric core) with SYCE3; the interaction remodels SYCP1 homotetramers to 2:1 heterotrimers with SYCE3. SYCP1/SYCE3 heterotrimers form lattice assemblies as part of the mature synaptonemal complex via both lateral and head-to-head interactions. Forms a complex with EWSR1, PRDM9, SYCP3 and REC8; complex formation is dependent of phosphorylated form of REC8 and requires PRDM9 bound to hotspot DNA; EWSR1 joins PRDM9 with the chromosomal axis through REC8. Interacts with SPO16.

It is found in the nucleus. It localises to the chromosome. The protein resides in the centromere. Its function is as follows. Major component of the transverse filaments of synaptonemal complexes, formed between homologous chromosomes during meiotic prophase. Required for normal assembly of the central element of the synaptonemal complexes. Required for normal centromere pairing during meiosis. Required for normal meiotic chromosome synapsis during oocyte and spermatocyte development and for normal male and female fertility. This Mesocricetus auratus (Golden hamster) protein is Synaptonemal complex protein 1.